Consider the following 660-residue polypeptide: MSEKRKSNKIIGIDLGTTNSCVSVMEGGQPKVIASSEGTRTTPSIVAFKGGETLVGIPAKRQAVTNPEKTLASTKRFIGRKFSEVESEIKTVPYKVAPNSKGDAVFDVEQKLYTPEEIGAQILMKMKETAEAYLGETVTEAVITVPAYFNDSQRASTKDAGRIAGLDVKRIIPEPTAAALAYGIDKEGDKKIAVFDLGGGTFDISILEIGDGVFEVLSTNGDTHLGGDDFDGVIINWMLDEFKKQEGIDLSKDNMALQRLKDAAEKAKIELSGVSSTEINQPFITIDANGPKHLALTLTRAQFEHLASSLIERTKQPCAQALKDAKLSASDIDDVLLVGGMSRMPAVQAVVKEIFGKEPNKGVNPDEVVAIGAAIQGGVLGGEVKDVLLLDVIPLSLGIETLGGVMTPLVERNTTIPTQKKQIFSTAADNQPAVTIVVLQGERPMAKDNKEIGRFDLTDIPPAPRGHPQIEVTFDIDANGILHVSAKDAASGREQKIRIEASSGLKEDEIQQMIRDAELHKEEDKQRKEASDVKNEADGMIFRAEKAVKDYHDKIPAELVKEIEEHIEKVRQAIKEDASTTAIKAASDELSTRMQKIGEAMQAQSASAAASSAANAQGGPNINSEDLKKHSFSTRPPAGGSASSTDNIEDADVEIVDKPE.

A Phosphothreonine; by autocatalysis modification is found at Thr-201. The tract at residues Glu-599 to Glu-660 is disordered. Over residues Ala-600–Gln-617 the composition is skewed to low complexity.

Belongs to the heat shock protein 70 family.

In terms of biological role, acts as a chaperone. This is Chaperone protein DnaK from Chlamydia trachomatis serovar A (strain ATCC VR-571B / DSM 19440 / HAR-13).